Reading from the N-terminus, the 145-residue chain is Cytochrome c550 (145 aa).

The first 24 residues, 1-24 (MNKNNVLRGLLVLAGLSLSSLALA), serve as a signal peptide directing secretion. In terms of domain architecture, Cytochrome c spans 60-142 (LAVEIGASAY…AIRSYLESVH (83 aa)). Heme c contacts are provided by cysteine 73, cysteine 76, histidine 77, and methionine 119.

Monomer. Interacts with the quinoprotein ethanol dehydrogenase (QEDH) ExaA. In terms of processing, binds 1 heme group per subunit.

Its subcellular location is the periplasm. It functions in the pathway alcohol metabolism; ethanol degradation; acetate from ethanol. Functionally, is an essential component of the ethanol oxidation system that allows P.aeruginosa to grow on ethanol as the sole carbon and energy source. Is the direct electron acceptor of the quinoprotein ethanol dehydrogenase (QEDH). The sequence is that of Cytochrome c550 from Pseudomonas aeruginosa (strain ATCC 15692 / DSM 22644 / CIP 104116 / JCM 14847 / LMG 12228 / 1C / PRS 101 / PAO1).